We begin with the raw amino-acid sequence, 300 residues long: Metal tolerance protein 12 (300 aa).

At 1–26 (MESPESFSTMFMKPIRHILSEKKSRK) the chain is on the cytoplasmic side. A helical transmembrane segment spans residues 27-47 (IALFLLINTAYMVVEFVAGFM). The Vacuolar segment spans residues 48 to 50 (SNS). A helical transmembrane segment spans residues 51–71 (LGLISDACHMLFDCAALAIGL). Over 72 to 91 (YASYISRLPANHQYNYGRGR) the chain is Cytoplasmic. Residues 92-112 (FEVLSGYVNAVFLVLVGALIV) form a helical membrane-spanning segment. Topologically, residues 113 to 128 (LESIERILDPQEISTN) are vacuolar. A helical membrane pass occupies residues 129–149 (SLLVVSVGGLLVNIVGLIFFH). The Cytoplasmic portion of the chain corresponds to 150–160 (EEHHHAHGGSG). The helical transmembrane segment at 161 to 181 (IFLHVLADTMGSVGVVISTLL) threads the bilayer. Residues 182-186 (IKYKG) lie on the Vacuolar side of the membrane. Residues 187-207 (WLVADPASSIFISILIIASVI) form a helical membrane-spanning segment. The Cytoplasmic segment spans residues 208-300 (PLLRNSAEIL…WTLQVESVNS (93 aa)).

It belongs to the cation diffusion facilitator (CDF) transporter (TC 2.A.4) family. SLC30A subfamily.

The protein resides in the vacuole membrane. Its function is as follows. Involved in sequestration of excess metal in the cytoplasm into vacuoles to maintain metal homeostasis. The chain is Metal tolerance protein 12 (MTP12) from Arabidopsis thaliana (Mouse-ear cress).